The sequence spans 227 residues: Phosphatidylethanolamine-binding protein 4 (227 aa).

Positions 1–22 (MGWTMRLVTAALLLGLMMVVTG) are cleaved as a signal peptide. N169 is a glycosylation site (N-linked (GlcNAc...) (complex) asparagine). Residues 188–227 (EPEASTQFMTQNYQDSPTLQAPRERASEPKHKNQAEIAAC) form an important for secretion region. The disordered stretch occupies residues 202 to 227 (DSPTLQAPRERASEPKHKNQAEIAAC). Basic and acidic residues predominate over residues 209 to 221 (PRERASEPKHKNQ).

The protein belongs to the phosphatidylethanolamine-binding protein family.

It localises to the secreted. In terms of biological role, promotes AKT phosphorylation, suggesting a possible role in the PI3K-AKT signaling pathway. In Homo sapiens (Human), this protein is Phosphatidylethanolamine-binding protein 4 (PEBP4).